The primary structure comprises 1452 residues: Protein clueless (1452 aa).

Disordered regions lie at residues 1-93 (MALE…SNGH) and 266-288 (KKTRPDSVDCTPPEYVTPGVSEP). Residues 8–24 (KNSNATATSDATATKAS) show a composition bias toward low complexity. A compositionally biased stretch (polar residues) spans 42-59 (PIPNSNHQNSNQNLVNGN). Positions 68–77 (AKKKGKKNRN) are enriched in basic residues. Ser272 carries the post-translational modification Phosphoserine. A Clu domain is found at 426 to 668 (RAEDAFSSKL…RTFPPDVNFL (243 aa)). 3 disordered regions span residues 726–775 (KQSE…GDTK), 962–1013 (AVSS…SSVS), and 1414–1452 (ANNNGEAEDAVPKDVEEQKEAGTQLTNGEKAAATEATSS). Over residues 750 to 766 (GADKTDVKEEKNEENEK) the composition is skewed to basic and acidic residues. Residues 970–985 (KKRGNGGKHNKHKSSK) show a composition bias toward basic residues. Residues 990-1013 (QQQQQATGNQNGSSSGSSNGSSVS) are compositionally biased toward low complexity. Residues 1423 to 1433 (AVPKDVEEQKE) are compositionally biased toward basic and acidic residues.

The protein belongs to the CLU family.

The protein localises to the cytoplasm. Its function is as follows. mRNA-binding protein involved in proper cytoplasmic distribution of mitochondria. The sequence is that of Protein clueless from Drosophila erecta (Fruit fly).